A 460-amino-acid chain; its full sequence is Endoglucanase 2 (460 aa).

Residues 1–32 (MIKGSSLKRIKSLVMMAIFSVSIITTAIVSSA) form the signal peptide. E99 functions as the Proton donor in the catalytic mechanism. Residue D155 is the Nucleophile of the active site. A Dockerin domain is found at 400–460 (QQGLKGDVNN…FAQLKVKLLN (61 aa)).

This sequence belongs to the glycosyl hydrolase 8 (cellulase D) family.

It catalyses the reaction Endohydrolysis of (1-&gt;4)-beta-D-glucosidic linkages in cellulose, lichenin and cereal beta-D-glucans.. This chain is Endoglucanase 2 (celB), found in Ruminiclostridium josui (Clostridium josui).